Here is a 439-residue protein sequence, read N- to C-terminus: Niacin transporter NiaP (439 aa).

A run of 12 helical transmembrane segments spans residues 20 to 40 (LWVV…IAFI), 57 to 77 (WIVS…GGLA), 84 to 104 (TVFA…AFAP), 108 to 128 (WLLA…PVAV), 143 to 163 (FIVL…LVSY), 169 to 189 (FGWH…YVII), 253 to 273 (LMLW…FTWL), 288 to 308 (FEYV…AAWL), 316 to 336 (ATLA…GQAD), 338 to 358 (VFNI…AWGV), 374 to 394 (FGAG…PIVV), and 407 to 427 (VFMM…ILGE).

This sequence belongs to the major facilitator superfamily. Sugar transporter (TC 2.A.1.1) family.

It localises to the cell inner membrane. Functions as a high-affinity transporter of niacin (nicotinamide or nicotinate). Probably substantially contributes to niacin transport when its concentration in the medium is very low. This Acinetobacter baylyi (strain ATCC 33305 / BD413 / ADP1) protein is Niacin transporter NiaP.